Consider the following 61-residue polypeptide: Small ribosomal subunit protein uS14B (61 aa).

Cysteine 24, cysteine 27, cysteine 40, and cysteine 43 together coordinate Zn(2+).

It belongs to the universal ribosomal protein uS14 family. Zinc-binding uS14 subfamily. In terms of assembly, part of the 30S ribosomal subunit. Contacts proteins S3 and S10. Zn(2+) serves as cofactor.

In terms of biological role, binds 16S rRNA, required for the assembly of 30S particles and may also be responsible for determining the conformation of the 16S rRNA at the A site. This chain is Small ribosomal subunit protein uS14B, found in Streptomyces avermitilis (strain ATCC 31267 / DSM 46492 / JCM 5070 / NBRC 14893 / NCIMB 12804 / NRRL 8165 / MA-4680).